Here is a 275-residue protein sequence, read N- to C-terminus: Adenosylcobinamide-GDP ribazoletransferase (275 aa).

6 helical membrane passes run 52–72 (VVGV…GVLG), 73–93 (VTPL…NRMM), 126–146 (MGFS…AALV), 181–201 (FGAM…LVAL), 208–228 (VAVW…GIIA), and 251–271 (IGAG…VAVA).

The protein belongs to the CobS family. The cofactor is Mg(2+).

The protein localises to the cell membrane. It carries out the reaction alpha-ribazole + adenosylcob(III)inamide-GDP = adenosylcob(III)alamin + GMP + H(+). The enzyme catalyses alpha-ribazole 5'-phosphate + adenosylcob(III)inamide-GDP = adenosylcob(III)alamin 5'-phosphate + GMP + H(+). It participates in cofactor biosynthesis; adenosylcobalamin biosynthesis; adenosylcobalamin from cob(II)yrinate a,c-diamide: step 7/7. Functionally, joins adenosylcobinamide-GDP and alpha-ribazole to generate adenosylcobalamin (Ado-cobalamin). Also synthesizes adenosylcobalamin 5'-phosphate from adenosylcobinamide-GDP and alpha-ribazole 5'-phosphate. The chain is Adenosylcobinamide-GDP ribazoletransferase from Corynebacterium efficiens (strain DSM 44549 / YS-314 / AJ 12310 / JCM 11189 / NBRC 100395).